The primary structure comprises 241 residues: MSKDTIFSAPIEKLGDFTFDENVAEVFPDMIQRSVPGYSNIITAIGMLAERFVTPDSQVYDLGCSRGAATLSARRNIRQPNVTIIGVDNSQPMVERARQHLNAYHSDIPVEILCDDIRNISIENASMVILNFTLQFLPPEDRQSLLEKIYRGLNPGGLLVLSEKFRFKDDTTNNLLIELHHAFKRANGYSELEVSQKRAALENVMRIDSSNTHKVRLKNVGFSHVELWFQCFNFGSVIAIK.

Residues tyrosine 38, 63 to 65 (GCS), 88 to 89 (DN), 116 to 117 (DI), asparagine 131, and arginine 198 each bind S-adenosyl-L-methionine.

This sequence belongs to the class I-like SAM-binding methyltransferase superfamily. Cx-SAM synthase family. Homodimer.

The catalysed reaction is prephenate + S-adenosyl-L-methionine = carboxy-S-adenosyl-L-methionine + 3-phenylpyruvate + H2O. Its function is as follows. Catalyzes the conversion of S-adenosyl-L-methionine (SAM) to carboxy-S-adenosyl-L-methionine (Cx-SAM). The sequence is that of Carboxy-S-adenosyl-L-methionine synthase from Actinobacillus succinogenes (strain ATCC 55618 / DSM 22257 / CCUG 43843 / 130Z).